The sequence spans 1159 residues: Caspase recruitment domain-containing protein 11 (1159 aa).

The CARD domain occupies 18–110 (EEEALWDNVE…ELYKLVTGKE (93 aa)). Positions 111–128 (PTRRFSTIVVEEGHEGLT) are linker. Residues 176 to 449 (FQERYYKMKE…KDNGSLDQSL (274 aa)) are a coiled coil. Residues 441–496 (DNGSLDQSLPRHLPATIISQNLGDTSPRTNGQEADDSSTSEESPEDSKYFLPYHPP) are disordered. Phosphoserine occurs at positions 448 and 466. Residues 450–671 (PRHLPATIIS…GHVRGTGPLV (222 aa)) are inhibitory domain (ID). The segment covering 457–472 (IISQNLGDTSPRTNGQ) has biased composition (polar residues). The segment covering 473–484 (EADDSSTSEESP) has biased composition (acidic residues). 2 positions are modified to phosphoserine: S512 and S540. A disordered region spans residues 532–578 (HEEDFTDGSPSSSRSLPVTSSFSKMQPHRSRSSIMSITAEPPGNDSI). A compositionally biased stretch (low complexity) spans 540–554 (SPSSSRSLPVTSSFS). The residue at position 564 (S564) is a Phosphoserine; by PKC/PRKCB and PKC/PRKCQ. Phosphoserine is present on S598. A disordered region spans residues 610 to 631 (NHERYSFGPPSIHSSSSSHQSE). The segment covering 620-630 (SIHSSSSSHQS) has biased composition (low complexity). 2 positions are modified to phosphoserine; by PKC/PRKCB and PKC/PRKCQ: S649 and S657. The PDZ domain maps to 672–760 (QHTTLNGDGL…LITLHYKVNH (89 aa)). Residues S891 and S930 each carry the phosphoserine modification. One can recognise a Guanylate kinase-like domain in the interval 978-1145 (RRRPVLFTPT…LLRVLKDKIV (168 aa)).

Homodimer; disulfide-linked. Homomultimer; polymerizes following activation, forming a nucleating helical template that seeds BCL10-filament formation via a CARD-CARD interaction. Interacts (via CARD domain) with BCL10 (via CARD domain); interaction takes place following CARD11 activation and polymerization, leading to the formation of a filamentous CBM complex assembly. Component of a CBM complex (CARD11-BCL10-MALT1) complex involved in NF-kappa-B activation. Found in a membrane raft complex, at least composed of BCL10, CARD11, DPP4 and IKBKB. Interacts (via PDZ domain) with DPP4 (via cytoplasmic tail). Post-translationally, phosphorylation at Ser-564, Ser-649 and Ser-657 by PRKCB and PRKCQ leads to a shift from an inactive to an active form that activates the NF-kappa-B signaling.

The protein resides in the cytoplasm. It localises to the membrane raft. Its activity is regulated as follows. Maintained in an autoinhibited state via homodimerization in which the CARD domain forms an extensive interaction with the adjacent linker and coiled-coil regions. Activation downstream of T-cell receptor (TCR) by phosphorylation by PRKCB and PRKCQ triggers CARD11 homooligomerization and BCL10 recruitment, followed by activation of NF-kappa-B. In terms of biological role, adapter protein that plays a key role in adaptive immune response by transducing the activation of NF-kappa-B downstream of T-cell receptor (TCR) and B-cell receptor (BCR) engagement. Transduces signals downstream TCR or BCR activation via the formation of a multiprotein complex together with BCL10 and MALT1 that induces NF-kappa-B and MAP kinase p38 (MAPK11, MAPK12, MAPK13 and/or MAPK14) pathways. Upon activation in response to TCR or BCR triggering, CARD11 homooligomerizes to form a nucleating helical template that recruits BCL10 via CARD-CARD interaction, thereby promoting polymerization of BCL10 and subsequent recruitment of MALT1: this leads to I-kappa-B kinase (IKK) phosphorylation and degradation, and release of NF-kappa-B proteins for nuclear translocation. Its binding to DPP4 induces T-cell proliferation and NF-kappa-B activation in a T-cell receptor/CD3-dependent manner. Promotes linear ubiquitination of BCL10 by promoting the targeting of BCL10 to RNF31/HOIP. Stimulates the phosphorylation of BCL10. Also activates the TORC1 signaling pathway. The protein is Caspase recruitment domain-containing protein 11 of Mus musculus (Mouse).